The following is a 125-amino-acid chain: Late histone H2A.1 (125 aa).

The span at 1-18 (MSGRGKGKAKGTKSKTRS) shows a compositional bias: basic residues. Residues 1 to 21 (MSGRGKGKAKGTKSKTRSSRA) are disordered. S2 carries the N-acetylserine modification. The residue at position 2 (S2) is a Phosphoserine. Q104 carries the N5-methylglutamine modification. A Glycyl lysine isopeptide (Lys-Gly) (interchain with G-Cter in ubiquitin) cross-link involves residue K119.

It belongs to the histone H2A family. As to quaternary structure, the nucleosome is a histone octamer containing two molecules each of H2A, H2B, H3 and H4 assembled in one H3-H4 heterotetramer and two H2A-H2B heterodimers. The octamer wraps approximately 147 bp of DNA. In terms of processing, monoubiquitination of Lys-119 gives a specific tag for epigenetic transcriptional repression. Post-translationally, phosphorylation of Ser-2 directly represses transcription.

The protein localises to the nucleus. Its subcellular location is the chromosome. In terms of biological role, core component of nucleosome. Nucleosomes wrap and compact DNA into chromatin, limiting DNA accessibility to the cellular machineries which require DNA as a template. Histones thereby play a central role in transcription regulation, DNA repair, DNA replication and chromosomal stability. DNA accessibility is regulated via a complex set of post-translational modifications of histones, also called histone code, and nucleosome remodeling. The protein is Late histone H2A.1 of Psammechinus miliaris (Green sea urchin).